The following is a 512-amino-acid chain: Inosine-5'-monophosphate dehydrogenase (512 aa).

2 CBS domains span residues 110-169 (FIMK…SAPV) and 173-231 (MTRR…PNSS). NAD(+) contacts are provided by residues 268 to 270 (DSS) and 318 to 320 (GMG). Residues G320 and G322 each coordinate K(+). An IMP-binding site is contributed by S323. Residue C325 participates in K(+) binding. The active-site Thioimidate intermediate is C325. Residues 358–360 (DGG), 381–382 (GS), and 405–409 (YRGMG) each bind IMP. Residue R423 is the Proton acceptor of the active site. Q435 is a binding site for IMP. The K(+) site is built by E494 and G495. The Microbody targeting signal motif lies at 510 to 512 (SKL).

Belongs to the IMPDH/GMPR family. As to quaternary structure, homotetramer. The cofactor is K(+).

Its subcellular location is the glycosome. The enzyme catalyses IMP + NAD(+) + H2O = XMP + NADH + H(+). It participates in purine metabolism; XMP biosynthesis via de novo pathway; XMP from IMP: step 1/1. Its activity is regulated as follows. Mycophenolic acid (MPA) is a non-competitive inhibitor that prevents formation of the closed enzyme conformation by binding to the same site as the amobile flap. In contrast, mizoribine monophosphate (MZP) is a competitive inhibitor that induces the closed conformation. MPA is a potent inhibitor of mammalian IMPDHs but a poor inhibitor of the bacterial enzymes. MZP is a more potent inhibitor of bacterial IMPDH. Functionally, catalyzes the conversion of inosine 5'-phosphate (IMP) to xanthosine 5'-phosphate (XMP), the first committed and rate-limiting step in the de novo synthesis of guanine nucleotides, and therefore plays an important role in the regulation of cell growth. In Trypanosoma brucei brucei, this protein is Inosine-5'-monophosphate dehydrogenase.